A 381-amino-acid polypeptide reads, in one-letter code: Chaperone protein DnaJ (381 aa).

In terms of domain architecture, J spans 5-70 (DFYEVLGVGR…QKKAAYDQYG (66 aa)). The segment at 136-214 (GVSKEIEVPT…CHGQGRKQKT (79 aa)) adopts a CR-type zinc-finger fold. Zn(2+) contacts are provided by Cys-149, Cys-152, Cys-166, Cys-169, Cys-188, Cys-191, Cys-202, and Cys-205. CXXCXGXG motif repeat units lie at residues 149–156 (CDTCDGSG), 166–173 (CGTCHGHG), 188–195 (CPTCHGKG), and 202–209 (CNECHGQG).

This sequence belongs to the DnaJ family. Homodimer. Requires Zn(2+) as cofactor.

It localises to the cytoplasm. Participates actively in the response to hyperosmotic and heat shock by preventing the aggregation of stress-denatured proteins and by disaggregating proteins, also in an autonomous, DnaK-independent fashion. Unfolded proteins bind initially to DnaJ; upon interaction with the DnaJ-bound protein, DnaK hydrolyzes its bound ATP, resulting in the formation of a stable complex. GrpE releases ADP from DnaK; ATP binding to DnaK triggers the release of the substrate protein, thus completing the reaction cycle. Several rounds of ATP-dependent interactions between DnaJ, DnaK and GrpE are required for fully efficient folding. Also involved, together with DnaK and GrpE, in the DNA replication of plasmids through activation of initiation proteins. The protein is Chaperone protein DnaJ of Vibrio campbellii (strain ATCC BAA-1116).